The sequence spans 71 residues: Pro-glucagon (71 aa).

Belongs to the glucagon family.

The protein resides in the secreted. Functionally, plays a key role in glucose metabolism and homeostasis. Regulates blood glucose by increasing gluconeogenesis and decreasing glycolysis. The chain is Pro-glucagon (gcg) from Ictalurus punctatus (Channel catfish).